A 482-amino-acid chain; its full sequence is GPI mannosyltransferase 3 (482 aa).

The chain crosses the membrane as a helical span at residues 12–32 (LFAFIFIFRLANSFAIETFFQ). Asparagine 80 carries an N-linked (GlcNAc...) asparagine glycan. 4 consecutive transmembrane segments (helical) span residues 114–134 (KLAW…YVIT), 137–155 (FSNN…FWPW), 175–195 (IIRP…LISI), and 199–219 (LKWV…NTAL). Residue asparagine 242 is glycosylated (N-linked (GlcNAc...) asparagine). The next 3 helical transmembrane spans lie at 252 to 272 (WHFY…PLMI), 274 to 294 (GLKK…FSLI), and 324 to 344 (FVLI…NVHE).

It belongs to the glycosyltransferase 22 family. PIGB subfamily.

The protein localises to the endoplasmic reticulum membrane. Its pathway is glycolipid biosynthesis; glycosylphosphatidylinositol-anchor biosynthesis. Its function is as follows. Mannosyltransferase involved in glycosylphosphatidylinositol-anchor biosynthesis. Transfers the third mannose to Man2-GlcN-acyl-PI during GPI precursor assembly. The sequence is that of GPI mannosyltransferase 3 (GPI10) from Candida albicans (strain SC5314 / ATCC MYA-2876) (Yeast).